Here is a 211-residue protein sequence, read N- to C-terminus: Pyridoxine/pyridoxamine 5'-phosphate oxidase (211 aa).

Substrate is bound by residues 8–11 and lysine 66; that span reads RNEY. Residues 61 to 66, 76 to 77, lysine 83, and glutamine 105 contribute to the FMN site; these read RVVLLK and FT. Positions 123, 127, and 131 each coordinate substrate. Residues 140 to 141 and tryptophan 184 contribute to the FMN site; that span reads QS. Position 190–192 (190–192) interacts with substrate; sequence RLH. Arginine 194 lines the FMN pocket.

This sequence belongs to the pyridoxamine 5'-phosphate oxidase family. Homodimer. The cofactor is FMN.

It catalyses the reaction pyridoxamine 5'-phosphate + O2 + H2O = pyridoxal 5'-phosphate + H2O2 + NH4(+). The enzyme catalyses pyridoxine 5'-phosphate + O2 = pyridoxal 5'-phosphate + H2O2. The protein operates within cofactor metabolism; pyridoxal 5'-phosphate salvage; pyridoxal 5'-phosphate from pyridoxamine 5'-phosphate: step 1/1. It participates in cofactor metabolism; pyridoxal 5'-phosphate salvage; pyridoxal 5'-phosphate from pyridoxine 5'-phosphate: step 1/1. Catalyzes the oxidation of either pyridoxine 5'-phosphate (PNP) or pyridoxamine 5'-phosphate (PMP) into pyridoxal 5'-phosphate (PLP). The polypeptide is Pyridoxine/pyridoxamine 5'-phosphate oxidase (Mannheimia succiniciproducens (strain KCTC 0769BP / MBEL55E)).